The primary structure comprises 449 residues: METRGRRPAALQHQQDQPQAHPGQRAARSAPLHRDPDYADEDPAPVERHDPGPSGRAPTTAVQRKPPQPAKRGDMLDRDAVEHVTELWDRLELLGQTLKSMPTADGLKPLKNFASLQELLSLGGERLLAHLVRENMQVRDMLNEVAPLLRDDGSCSSLNYQLQPVIGVIYGPTGCGKSQLLRNLLSSQLISPTPETVFFIAPQVDMIPPSELKAWEMQICEGNYAPGPDGTIIPQSGTLRPRFVKMAYDDLILEHNYDVSDPRNIFAQAAARGPIAIIMDECMENLGGHKGVSKFFHAFPSKLHDKFPKCTGYTVLVVLHNMNPRRDMAGNIANLKIQSKMHLISPRMHPSQLNRFVNTYTKGLPLAISLLLKDIFRHHAQRSCYDWIIYNTTPQHEALQWCYLHPRDGLMPMYLNIQSHLYHVLEKIHRTLNDRDRWSRAYRARKTPK.

Residues 1-77 (METRGRRPAA…QPAKRGDMLD (77 aa)) form a disordered region. 171-178 (GPTGCGKS) contacts ATP. A DNA-binding region spans residues 440-449 (RAYRARKTPK).

It belongs to the adenoviridae packaging protein 1 family. Homodimer. Part of a genome packaging complex composed of packaging proteins 1, 2 and 3; this complex specifically binds to the packaging sequence on the left end of viral genomic DNA and performs packaging of the viral genome. Interacts with protein 33K.

The protein resides in the virion. It is found in the host nucleus. It localises to the host nucleoplasm. The protein localises to the host nucleolus. Functionally, component of the packaging machinery which encapsidates the viral DNA into preformed capsids and transcriptional activator of the viral major late promoter (MLP). Binds, along with packaging proteins 2 and 3, to the specific packaging sequence on the left end of viral genomic DNA and displays ATPase activity thereby providing the power stroke of the packaging machinery. The activity of packaging protein IVa2 is stimulated by protein 33K which acts as a terminase. May be the protein that pumps DNA into the capsid powered by ATP hydrolysis. Specifically binds to the 5'-CG-3' nucleotides of the repeats making up the packaging sequence. Component of the DEF-A and DEF-B transcription factors that bind downstream elements of the major late promoter (MLP), and stimulate transcription from the MLP after initiation of viral DNA replication. DEF-A is a heterodimer packaging proteins 1 and 2 and DEF-B is a homodimer of packaging protein 1. This is Packaging protein 1 from Homo sapiens (Human).